A 409-amino-acid chain; its full sequence is Elongation factor 1-gamma (409 aa).

One can recognise a GST N-terminal domain in the interval 2-81 (SVGTVYGKIG…YLASLNKTRA (80 aa)). Residues 86–212 (TAEEKAKVLQ…EPLKFIDQPL (127 aa)) form the GST C-terminal domain. Basic and acidic residues predominate over residues 219-248 (NKEAAPAKKAEKKKDEKKKNAPKPQAERPA). The tract at residues 219–261 (NKEAAPAKKAEKKKDEKKKNAPKPQAERPAKPPKHPLASAPNG) is disordered. Residues 251-409 (PKHPLASAPN…REVADGKVCK (159 aa)) enclose the EF-1-gamma C-terminal domain.

In terms of assembly, EF-1 is composed of four subunits: alpha, beta, delta, and gamma.

Its function is as follows. Probably plays a role in anchoring the complex to other cellular components. This Schizosaccharomyces pombe (strain 972 / ATCC 24843) (Fission yeast) protein is Elongation factor 1-gamma (tef3).